Consider the following 340-residue polypeptide: Glutamyl-tRNA reductase (340 aa).

Substrate contacts are provided by residues 49–52, serine 108, 113–115, and glutamine 119; these read TCNR and ETE. Cysteine 50 functions as the Nucleophile in the catalytic mechanism. 188–193 contacts NADP(+); that stretch reads GAGEMS.

This sequence belongs to the glutamyl-tRNA reductase family. As to quaternary structure, homodimer.

It catalyses the reaction (S)-4-amino-5-oxopentanoate + tRNA(Glu) + NADP(+) = L-glutamyl-tRNA(Glu) + NADPH + H(+). It functions in the pathway porphyrin-containing compound metabolism; protoporphyrin-IX biosynthesis; 5-aminolevulinate from L-glutamyl-tRNA(Glu): step 1/2. In terms of biological role, catalyzes the NADPH-dependent reduction of glutamyl-tRNA(Glu) to glutamate 1-semialdehyde (GSA). The polypeptide is Glutamyl-tRNA reductase (Akkermansia muciniphila (strain ATCC BAA-835 / DSM 22959 / JCM 33894 / BCRC 81048 / CCUG 64013 / CIP 107961 / Muc)).